Consider the following 122-residue polypeptide: Large ribosomal subunit protein uL14 (122 aa).

The protein belongs to the universal ribosomal protein uL14 family. Part of the 50S ribosomal subunit. Forms a cluster with proteins L3 and L19. In the 70S ribosome, L14 and L19 interact and together make contacts with the 16S rRNA in bridges B5 and B8.

Its function is as follows. Binds to 23S rRNA. Forms part of two intersubunit bridges in the 70S ribosome. In Malacoplasma penetrans (strain HF-2) (Mycoplasma penetrans), this protein is Large ribosomal subunit protein uL14.